We begin with the raw amino-acid sequence, 652 residues long: Probable potassium transport system protein Kup (652 aa).

The segment covering 1–20 (MSNDTSPGTSSVDSKSSDPS) has biased composition (low complexity). Positions 1 to 26 (MSNDTSPGTSSVDSKSSDPSYGVPGH) are disordered. Helical transmembrane passes span 36–56 (LSLG…LYAL), 76–96 (LVSL…VMFI), 125–145 (WLIV…MITP), 161–181 (PSFD…LFCI), 193–213 (FGPI…FNII), 228–248 (AIHF…SVVL), 270–290 (LGWY…QCAL), 314–334 (LIIL…TGAF), 362–382 (IYIP…IAMF), 391–411 (AYGI…GVLV), 419–439 (AWQS…FFLS), and 444–464 (IPEG…MLMT).

The protein belongs to the HAK/KUP transporter (TC 2.A.72) family.

The protein resides in the cell inner membrane. It catalyses the reaction K(+)(in) + H(+)(in) = K(+)(out) + H(+)(out). Transport of potassium into the cell. Likely operates as a K(+):H(+) symporter. This chain is Probable potassium transport system protein Kup, found in Zymomonas mobilis subsp. mobilis (strain ATCC 31821 / ZM4 / CP4).